The chain runs to 425 residues: Neuromedin-U receptor 1 (425 aa).

Over 1 to 59 (MTPPCLNCSFFPGQLSPNASTGLLSCNDSEFKEHFDLEDLNLTHEDLRLKYLGPQQVKQ) the chain is Extracellular. Asparagine 41 is a glycosylation site (N-linked (GlcNAc...) asparagine). The helical transmembrane segment at 60–80 (FLPICVTYLLIFVVGTLGNGL) threads the bilayer. Residues 81-96 (TCTVILRQKAMHTPTN) are Cytoplasmic-facing. A helical transmembrane segment spans residues 97–117 (FYLFSLAVSDLLVLLVGLPLE). The Extracellular portion of the chain corresponds to 118-137 (LYEMQHNYPFQLGAGGCYFR). A disulfide bridge connects residues cysteine 134 and cysteine 219. The helical transmembrane segment at 138 to 158 (ILLLETVCLASVLNVTALSVE) threads the bilayer. At 159–181 (RYVAVVHPLQAKSVMTRTHVRRM) the chain is on the cytoplasmic side. Residues 182-202 (LGAIWVFAILFSLPNTSLHGL) traverse the membrane as a helical segment. The Extracellular segment spans residues 203–235 (SPLYVPCRGPVPDSVTCTLVRPQFFYKLVIQTT). A helical membrane pass occupies residues 236–256 (ILLFFCLPMVTISVLYLLIGL). At 257 to 294 (RLRRERILLQEEVKGRISAAARQASHRSIQLRDRERRQ) the chain is on the cytoplasmic side. A helical membrane pass occupies residues 295–315 (VTKMLIALVIVFGTCWVPFHA). Over 316–331 (DRLMWSMVSHWTDGLR) the chain is Extracellular. A helical membrane pass occupies residues 332 to 352 (LAFQSVHLASGVFLYLGSAAN). Residues 353 to 425 (PVLYNLMSTR…GCEQETDPPE (73 aa)) lie on the Cytoplasmic side of the membrane. Residues 406-425 (DVPLAENRDPGCEQETDPPE) form a disordered region.

This sequence belongs to the G-protein coupled receptor 1 family. In terms of tissue distribution, highly expressed in the small intestine and lung. Low expression in the central nervous system.

The protein localises to the cell membrane. Functionally, receptor for the neuromedin-U and neuromedin-S neuropeptides. The polypeptide is Neuromedin-U receptor 1 (Nmur1) (Rattus norvegicus (Rat)).